A 386-amino-acid polypeptide reads, in one-letter code: uncharacterized protein (386 aa).

Residue lysine 185 is modified to N6-(pyridoxal phosphate)lysine.

Belongs to the DegT/DnrJ/EryC1 family. The cofactor is pyridoxal 5'-phosphate.

This is an uncharacterized protein from Methanocaldococcus jannaschii (strain ATCC 43067 / DSM 2661 / JAL-1 / JCM 10045 / NBRC 100440) (Methanococcus jannaschii).